The following is a 363-amino-acid chain: Protein RecA (363 aa).

Position 78 to 85 (78 to 85 (GPESGGKT)) interacts with ATP.

The protein belongs to the RecA family.

Its subcellular location is the cytoplasm. Can catalyze the hydrolysis of ATP in the presence of single-stranded DNA, the ATP-dependent uptake of single-stranded DNA by duplex DNA, and the ATP-dependent hybridization of homologous single-stranded DNAs. It interacts with LexA causing its activation and leading to its autocatalytic cleavage. Probably involved in base excision repair. Its function is as follows. Following severe irradiation (7 kGy of gamma irradiation) genomic DNA is fragmented. DNA is progressively degraded for the first 1.5 hours after IR, in a step promoted by RecA and counterbalanced by DNA Pol I and Pol III, followed by massive DNA synthesis and genome reassembly in the next hour. Optimal priming of DNA synthesis requires both RecA and RadA, Pol III initiates DNA synthesis while both Pol I and Pol III are required for its continuation. In the absence of RecA the majority of the chromosome is still reconstituted, via either single-strand annealing or non-homologous end joining. This is Protein RecA from Deinococcus radiodurans (strain ATCC 13939 / DSM 20539 / JCM 16871 / CCUG 27074 / LMG 4051 / NBRC 15346 / NCIMB 9279 / VKM B-1422 / R1).